The chain runs to 151 residues: FAD synthase (151 aa).

ATP-binding positions include Thr12 to Phe13, His17 to His20, Asp97, and Tyr125.

Belongs to the archaeal FAD synthase family. In terms of assembly, homodimer. It depends on a divalent metal cation as a cofactor.

It catalyses the reaction FMN + ATP + H(+) = FAD + diphosphate. The protein operates within cofactor biosynthesis; FAD biosynthesis; FAD from FMN: step 1/1. In terms of biological role, catalyzes the transfer of the AMP portion of ATP to flavin mononucleotide (FMN) to produce flavin adenine dinucleotide (FAD) coenzyme. This is FAD synthase from Methanocaldococcus sp. (strain FS406-22).